Here is a 529-residue protein sequence, read N- to C-terminus: Heat shock protein 60 (529 aa).

The disordered stretch occupies residues 460-484 (YQATVQHPPPQSSYEEDGRRPPTQP).

The chain is Heat shock protein 60 from Giardia intestinalis (Giardia lamblia).